Here is a 679-residue protein sequence, read N- to C-terminus: FAST kinase domain-containing protein 2, mitochondrial (679 aa).

A phosphoserine mark is found at Ser113 and Ser126. Residues 607–664 form the RAP domain; that stretch reads VAVLCVPKSAYCLNSNHLRGLMAMKIRHLNVMGFHVILIHNWELKKLKMEDAVTFVRK.

The protein belongs to the FAST kinase family. In terms of assembly, monomer. Found in a complex with GRSF1, DDX28, DHX30 and FASTKD5. Associates with the 16S mitochondrial rRNA (16S mt-rRNA). Forms a regulatory protein-RNA complex, consisting of RCC1L, NGRN, RPUSD3, RPUSD4, TRUB2, FASTKD2 and 16S mt-rRNA.

It localises to the mitochondrion matrix. Its subcellular location is the mitochondrion nucleoid. Functionally, plays an important role in assembly of the mitochondrial large ribosomal subunit. As a component of a functional protein-RNA module, consisting of RCC1L, NGRN, RPUSD3, RPUSD4, TRUB2, FASTKD2 and 16S mitochondrial ribosomal RNA (16S mt-rRNA), controls 16S mt-rRNA abundance and is required for intra-mitochondrial translation. May play a role in mitochondrial apoptosis. This Rattus norvegicus (Rat) protein is FAST kinase domain-containing protein 2, mitochondrial (Fastkd2).